The chain runs to 396 residues: Elongation factor Tu (396 aa).

Residues 10–205 (KEHVNIGTIG…AVDNYIETPV (196 aa)) form the tr-type G domain. The tract at residues 19–26 (GHVDHGKT) is G1. 19 to 26 (GHVDHGKT) is a binding site for GTP. Threonine 26 is a binding site for Mg(2+). The segment at 60–64 (GITIN) is G2. The interval 81 to 84 (DCPG) is G3. Residues 81 to 85 (DCPGH) and 136 to 139 (NKVD) contribute to the GTP site. The interval 136-139 (NKVD) is G4. Residues 175–177 (SAL) form a G5 region.

It belongs to the TRAFAC class translation factor GTPase superfamily. Classic translation factor GTPase family. EF-Tu/EF-1A subfamily. Monomer.

It localises to the cytoplasm. It catalyses the reaction GTP + H2O = GDP + phosphate + H(+). Functionally, GTP hydrolase that promotes the GTP-dependent binding of aminoacyl-tRNA to the A-site of ribosomes during protein biosynthesis. The sequence is that of Elongation factor Tu from Mycoplasmopsis pulmonis (strain UAB CTIP) (Mycoplasma pulmonis).